The primary structure comprises 231 residues: Ribose-5-phosphate isomerase A (231 aa).

Residues 32-35 (TGST), 85-88 (DGAD), and 98-101 (KGGG) each bind substrate. Catalysis depends on glutamate 107, which acts as the Proton acceptor. Substrate is bound at residue lysine 125.

It belongs to the ribose 5-phosphate isomerase family. Homodimer.

The catalysed reaction is aldehydo-D-ribose 5-phosphate = D-ribulose 5-phosphate. It functions in the pathway carbohydrate degradation; pentose phosphate pathway; D-ribose 5-phosphate from D-ribulose 5-phosphate (non-oxidative stage): step 1/1. Its function is as follows. Catalyzes the reversible conversion of ribose-5-phosphate to ribulose 5-phosphate. This Burkholderia mallei (strain NCTC 10247) protein is Ribose-5-phosphate isomerase A.